A 423-amino-acid chain; its full sequence is Probable multifunctional protein ADE2 (423 aa).

Positions 1-263 (MSSLAEIASR…KVMDITATFS (263 aa)) are SAICAR synthetase. Residues 264 to 423 (KHQQKCHVLV…NIYNANRKLE (160 aa)) are AIR carboxylase.

This sequence in the N-terminal section; belongs to the SAICAR synthetase family. In the C-terminal section; belongs to the AIR carboxylase family. Class II subfamily.

The catalysed reaction is 5-amino-1-(5-phospho-D-ribosyl)imidazole-4-carboxylate + L-aspartate + ATP = (2S)-2-[5-amino-1-(5-phospho-beta-D-ribosyl)imidazole-4-carboxamido]succinate + ADP + phosphate + 2 H(+). The enzyme catalyses 5-amino-1-(5-phospho-D-ribosyl)imidazole-4-carboxylate + H(+) = 5-amino-1-(5-phospho-beta-D-ribosyl)imidazole + CO2. It functions in the pathway purine metabolism; IMP biosynthesis via de novo pathway; 5-amino-1-(5-phospho-D-ribosyl)imidazole-4-carboxamide from 5-amino-1-(5-phospho-D-ribosyl)imidazole-4-carboxylate: step 1/2. The protein operates within purine metabolism; IMP biosynthesis via de novo pathway; 5-amino-1-(5-phospho-D-ribosyl)imidazole-4-carboxylate from 5-amino-1-(5-phospho-D-ribosyl)imidazole (carboxylase route): step 1/1. The sequence is that of Probable multifunctional protein ADE2 from Caenorhabditis elegans.